The chain runs to 172 residues: Large ribosomal subunit protein uL10 (172 aa).

It belongs to the universal ribosomal protein uL10 family. In terms of assembly, part of the ribosomal stalk of the 50S ribosomal subunit. The N-terminus interacts with L11 and the large rRNA to form the base of the stalk. The C-terminus forms an elongated spine to which L12 dimers bind in a sequential fashion forming a multimeric L10(L12)X complex.

Functionally, forms part of the ribosomal stalk, playing a central role in the interaction of the ribosome with GTP-bound translation factors. This is Large ribosomal subunit protein uL10 from Methylorubrum populi (strain ATCC BAA-705 / NCIMB 13946 / BJ001) (Methylobacterium populi).